Here is a 473-residue protein sequence, read N- to C-terminus: Sulfate adenylyltransferase subunit 1 (473 aa).

Positions 19–238 constitute a tr-type G domain; the sequence is KTLLKFLTCG…IKIKNSISSE (220 aa). The segment at 28–35 is G1; it reads GSVDDGKS. Residue 28-35 coordinates GTP; it reads GSVDDGKS. A G2 region spans residues 86 to 90; sequence GITID. The segment at 107 to 110 is G3; sequence DTPG. Residues 107–111 and 162–165 contribute to the GTP site; these read DTPGH and NKMD. The tract at residues 162–165 is G4; sequence NKMD. The segment at 200–202 is G5; it reads SAL.

It belongs to the TRAFAC class translation factor GTPase superfamily. Classic translation factor GTPase family. CysN/NodQ subfamily. Heterodimer composed of CysD, the smaller subunit, and CysN.

It catalyses the reaction sulfate + ATP + H(+) = adenosine 5'-phosphosulfate + diphosphate. The protein operates within sulfur metabolism; hydrogen sulfide biosynthesis; sulfite from sulfate: step 1/3. With CysD forms the ATP sulfurylase (ATPS) that catalyzes the adenylation of sulfate producing adenosine 5'-phosphosulfate (APS) and diphosphate, the first enzymatic step in sulfur assimilation pathway. APS synthesis involves the formation of a high-energy phosphoric-sulfuric acid anhydride bond driven by GTP hydrolysis by CysN coupled to ATP hydrolysis by CysD. The sequence is that of Sulfate adenylyltransferase subunit 1 from Buchnera aphidicola subsp. Acyrthosiphon pisum (strain 5A).